A 351-amino-acid chain; its full sequence is N-terminal EF-hand calcium-binding protein 1 (351 aa).

Residue Ser-4 is modified to Phosphoserine. 2 EF-hand domains span residues 26–61 (KGMS…GVLS) and 60–95 (LSGE…HLGE). Residues Asp-39, Asn-41, Asp-43, Lys-45, and Glu-50 each contribute to the Ca(2+) site. Residues 135–163 (LLKETLNQLQSLQNSLECAMETTEEQTRQ) adopt a coiled-coil conformation. The disordered stretch occupies residues 180–203 (GKRSSRRVQRHNSFSPNSPQFNVS). The segment covering 190–202 (HNSFSPNSPQFNV) has biased composition (polar residues). A phosphoserine mark is found at Ser-192 and Ser-197. Residues 209–275 (EEDNQWMTQI…EEFQLALKHY (67 aa)) adopt a coiled-coil conformation. Residues 252 to 340 (MLVQRQMSVI…LETPELTSTM (89 aa)) form the ABM domain.

In terms of assembly, interacts with STX1. May interact with CPNE6. As to expression, expressed in brain (at protein level).

It localises to the cytoplasm. This is N-terminal EF-hand calcium-binding protein 1 (NECAB1) from Homo sapiens (Human).